Consider the following 283-residue polypeptide: Formamidopyrimidine-DNA glycosylase (283 aa).

The active-site Schiff-base intermediate with DNA is the Pro-2. The Proton donor role is filled by Glu-3. Lys-60 acts as the Proton donor; for beta-elimination activity in catalysis. Residues His-95, Arg-114, and Arg-159 each contribute to the DNA site. An FPG-type zinc finger spans residues 244–278 (WVYGRHNQPCRVCGTPIERIKLGGRSSHFCPQCQP). Residue Arg-268 is the Proton donor; for delta-elimination activity of the active site.

Belongs to the FPG family. Monomer. Requires Zn(2+) as cofactor.

It carries out the reaction Hydrolysis of DNA containing ring-opened 7-methylguanine residues, releasing 2,6-diamino-4-hydroxy-5-(N-methyl)formamidopyrimidine.. The enzyme catalyses 2'-deoxyribonucleotide-(2'-deoxyribose 5'-phosphate)-2'-deoxyribonucleotide-DNA = a 3'-end 2'-deoxyribonucleotide-(2,3-dehydro-2,3-deoxyribose 5'-phosphate)-DNA + a 5'-end 5'-phospho-2'-deoxyribonucleoside-DNA + H(+). Involved in base excision repair of DNA damaged by oxidation or by mutagenic agents. Acts as a DNA glycosylase that recognizes and removes damaged bases. Has a preference for oxidized purines, such as 7,8-dihydro-8-oxoguanine (8-oxoG). Has AP (apurinic/apyrimidinic) lyase activity and introduces nicks in the DNA strand. Cleaves the DNA backbone by beta-delta elimination to generate a single-strand break at the site of the removed base with both 3'- and 5'-phosphates. The chain is Formamidopyrimidine-DNA glycosylase from Crocosphaera subtropica (strain ATCC 51142 / BH68) (Cyanothece sp. (strain ATCC 51142)).